Consider the following 190-residue polypeptide: Calcium-binding protein NCS-1 (190 aa).

Gly-2 carries the N-myristoyl glycine lipid modification. EF-hand domains lie at Ser-40–Phe-58, Asp-60–Gly-95, Glu-96–Met-131, and Thr-144–Ile-179. Residues Asp-73, Asp-75, Asn-77, Tyr-79, Glu-84, Asp-109, Asp-111, Asn-113, Glu-120, Asp-157, Asn-159, Asp-161, Gln-163, and Glu-168 each contribute to the Ca(2+) site.

This sequence belongs to the recoverin family.

The protein localises to the membrane. Negatively regulates sporulation perhaps by controlling Ca(2+)-dependent desensitization of git3. The protein is Calcium-binding protein NCS-1 (ncs1) of Schizosaccharomyces pombe (strain 972 / ATCC 24843) (Fission yeast).